A 271-amino-acid polypeptide reads, in one-letter code: Transmembrane protein 150A (271 aa).

Topologically, residues 1-2 (MT) are cytoplasmic. Residues 3 to 23 (AWILLPVSLSAFSITGIWTVY) traverse the membrane as a helical segment. The Extracellular segment spans residues 24–75 (AMAVMNHHVCPVENWSYNESCPPDPAEQGGPKTCCTLDDVPLISKCGSYPPE). 2 N-linked (GlcNAc...) asparagine glycosylation sites follow: N37 and N41. Residues 76–96 (SCLFSLIGNMGAFMVALICLL) form a helical membrane-spanning segment. At 97-108 (RYGQLLEQSRHS) the chain is on the cytoplasmic side. The chain crosses the membrane as a helical span at residues 109–129 (WVNTTALITGCTNAAGLLVVG). The Extracellular portion of the chain corresponds to 130 to 140 (NFQVDHARSLH). Residues 141–161 (YVGAGVAFPAGLLFVCLHCAL) traverse the membrane as a helical segment. At 162–178 (SYQGATAPLDLAVAYLR) the chain is on the cytoplasmic side. Residues 179–199 (SVLAVIAFITLVLSGVFFVHE) traverse the membrane as a helical segment. Residues 200-211 (SSQLQHGAALCE) lie on the Extracellular side of the membrane. The chain crosses the membrane as a helical span at residues 212 to 232 (WVCVIDILIFYGTFSYEFGAV). Residues 233–271 (SSDTLVAALQPTPGRACKSSGSSSTSTHLNCAPESIAMI) are Cytoplasmic-facing.

The protein belongs to the DRAM/TMEM150 family. Interacts (via C-terminal cytoplasmic tail) with PI4KA.

It is found in the cell membrane. Regulates localization of phosphatidylinositol 4-kinase (PI4K) to the plasma membrane, possibly by reducing the association of TTC7 (TTC7A or TTC7B) with the PI4K complex. Acts as a regulator of phosphatidylinositol 4-phosphate (PtdIns(4)P) synthesis. May also play a role in fasting-induced catabolism. The chain is Transmembrane protein 150A (TMEM150A) from Homo sapiens (Human).